Reading from the N-terminus, the 427-residue chain is MNTLTLEPIARVEGTVNLPGSKSVSNRALLLAALARGTTRLTNLLDSDDIRHMLNALKTLGVSYELSANKTECTVHGLGRAFSSSEPVNLFLGNAGTAMRPLCAALCLSNGEFTLTGEPRMEERPIAHLVDALRQAGAHVHYLKKDGYPPLTIEGKGLWGGEVVIDGSVSSQFLTAFLMAAPLASGDVRIRIRGELVSKPYIDITLHIMKQFGVTVEHDDYQVFYVRGNQTYVSPGTFLVEGDASSASYFLAAGAIKGKVRVTGIGKNSIQGDIRFADVLEKMGAKITWGDDFIEAENVGELQAVDLDMNQIPDAAMTIATAALFANGKTAIRNIYNWRVKETDRLTAMATELRKVGAEVVEGHDFIEITPPAQLKHAAIDTYNDHRIAMCFSLVALSDTKVTINDPGCTSKTFPDYFTKFASVSQR.

Lysine 22, serine 23, and arginine 27 together coordinate 3-phosphoshikimate. Residue lysine 22 participates in phosphoenolpyruvate binding. Phosphoenolpyruvate contacts are provided by glycine 96 and arginine 124. 3-phosphoshikimate-binding residues include serine 170, serine 171, glutamine 172, serine 198, aspartate 314, asparagine 337, and lysine 341. Phosphoenolpyruvate is bound at residue glutamine 172. Aspartate 314 acts as the Proton acceptor in catalysis. Arginine 345, arginine 387, and lysine 412 together coordinate phosphoenolpyruvate.

It belongs to the EPSP synthase family. As to quaternary structure, monomer.

Its subcellular location is the cytoplasm. The enzyme catalyses 3-phosphoshikimate + phosphoenolpyruvate = 5-O-(1-carboxyvinyl)-3-phosphoshikimate + phosphate. It participates in metabolic intermediate biosynthesis; chorismate biosynthesis; chorismate from D-erythrose 4-phosphate and phosphoenolpyruvate: step 6/7. Catalyzes the transfer of the enolpyruvyl moiety of phosphoenolpyruvate (PEP) to the 5-hydroxyl of shikimate-3-phosphate (S3P) to produce enolpyruvyl shikimate-3-phosphate and inorganic phosphate. The polypeptide is 3-phosphoshikimate 1-carboxyvinyltransferase (Tolumonas auensis (strain DSM 9187 / NBRC 110442 / TA 4)).